We begin with the raw amino-acid sequence, 304 residues long: Glyceraldehyde-3-phosphate dehydrogenase 2 (304 aa).

Residues 1–2 (RI), Asp22, and Arg67 contribute to the NAD(+) site. D-glyceraldehyde 3-phosphate contacts are provided by residues 138-140 (SCT), Thr169, 198-199 (TG), and Arg221. The active-site Nucleophile is Cys139. Residue Asn303 participates in NAD(+) binding.

This sequence belongs to the glyceraldehyde-3-phosphate dehydrogenase family. As to quaternary structure, homotetramer.

Its subcellular location is the cytoplasm. The enzyme catalyses D-glyceraldehyde 3-phosphate + phosphate + NAD(+) = (2R)-3-phospho-glyceroyl phosphate + NADH + H(+). The protein operates within carbohydrate degradation; glycolysis; pyruvate from D-glyceraldehyde 3-phosphate: step 1/5. The protein is Glyceraldehyde-3-phosphate dehydrogenase 2 (Gapdh2) of Drosophila subobscura (Fruit fly).